The primary structure comprises 292 residues: NAD kinase (292 aa).

The Proton acceptor role is filled by aspartate 72. NAD(+) is bound by residues 72-73 (DG), 146-147 (NE), histidine 157, arginine 174, aspartate 176, and 187-192 (TAYSLS).

This sequence belongs to the NAD kinase family. The cofactor is a divalent metal cation.

It is found in the cytoplasm. The catalysed reaction is NAD(+) + ATP = ADP + NADP(+) + H(+). Functionally, involved in the regulation of the intracellular balance of NAD and NADP, and is a key enzyme in the biosynthesis of NADP. Catalyzes specifically the phosphorylation on 2'-hydroxyl of the adenosine moiety of NAD to yield NADP. This chain is NAD kinase, found in Shewanella loihica (strain ATCC BAA-1088 / PV-4).